The following is a 127-amino-acid chain: Protein FAM229A (127 aa).

The disordered stretch occupies residues 1-96 (MLPSSTPGPG…ATEHNPVRPL (96 aa)). Low complexity predominate over residues 24-39 (RSPAARAPAAASSLGP).

It belongs to the FAM229 family.

In Homo sapiens (Human), this protein is Protein FAM229A (FAM229A).